A 124-amino-acid chain; its full sequence is Small ribosomal subunit protein bS16 (124 aa).

Basic and acidic residues predominate over residues 84 to 110 (EKAERKNLKKGEPGKAAKERAEKRAAR). Residues 84–124 (EKAERKNLKKGEPGKAAKERAEKRAAREAAANAPAEEAASE) form a disordered region. Over residues 111 to 124 (EAAANAPAEEAASE) the composition is skewed to low complexity.

This sequence belongs to the bacterial ribosomal protein bS16 family.

The chain is Small ribosomal subunit protein bS16 from Paracoccus denitrificans (strain Pd 1222).